A 517-amino-acid chain; its full sequence is Probable bifunctional methylthioribulose-1-phosphate dehydratase/enolase-phosphatase E1 (517 aa).

Residues 1-242 are methylthioribulose-1-phosphate dehydratase; it reads MACGGCSCEA…CIKLYQLGID (242 aa). Residue cysteine 114 participates in substrate binding. 2 residues coordinate Zn(2+): histidine 132 and histidine 134. The active-site Proton donor/acceptor; for methylthioribulose-1-phosphate dehydratase activity is glutamate 157. A Zn(2+)-binding site is contributed by histidine 207. The tract at residues 278–517 is enolase-phosphatase E1; the sequence is VVLDIEGTTT…FRTIKSFSEI (240 aa). Residues aspartate 281 and glutamate 283 each contribute to the Mg(2+) site. Residues 416-417 and lysine 450 each bind substrate; that span reads SS. Aspartate 476 serves as a coordination point for Mg(2+).

It in the N-terminal section; belongs to the aldolase class II family. MtnB subfamily. The protein in the C-terminal section; belongs to the HAD-like hydrolase superfamily. MasA/MtnC family. It depends on Zn(2+) as a cofactor. The cofactor is Mg(2+).

It carries out the reaction 5-(methylsulfanyl)-D-ribulose 1-phosphate = 5-methylsulfanyl-2,3-dioxopentyl phosphate + H2O. The catalysed reaction is 5-methylsulfanyl-2,3-dioxopentyl phosphate + H2O = 1,2-dihydroxy-5-(methylsulfanyl)pent-1-en-3-one + phosphate. It participates in amino-acid biosynthesis; L-methionine biosynthesis via salvage pathway; L-methionine from S-methyl-5-thio-alpha-D-ribose 1-phosphate: step 2/6. Its pathway is amino-acid biosynthesis; L-methionine biosynthesis via salvage pathway; L-methionine from S-methyl-5-thio-alpha-D-ribose 1-phosphate: step 3/6. It functions in the pathway amino-acid biosynthesis; L-methionine biosynthesis via salvage pathway; L-methionine from S-methyl-5-thio-alpha-D-ribose 1-phosphate: step 4/6. This chain is Probable bifunctional methylthioribulose-1-phosphate dehydratase/enolase-phosphatase E1, found in Sorghum bicolor (Sorghum).